The following is a 630-amino-acid chain: MQSTSSTSSGSCSRPLEGSTLNSGGSAENVARDGGSGDDSVGIGDENPSGSSAATNGHDSKHNGFIVNNNGSSSRIVDGENNRENTSCSGVQLDKSNQEIIRLIGQYLHDVGLDKSVQTLMLESGCYLEHPSATKFREHVLMGDWSKADSDLKDLEPLIDNGKLATITEMKFILLEQKYLEHLDDGNPLDALHVLRSELTPLQHNITRVHQLSSYMMCSTNQDLYQRAKWEGKGILSRALVMERLQTFMPPSVMMSPRRLRTLLQQAVELQSQHCPCHDMAWETNLETVSLLTDHCCTTDGFPMQTIQILTDHCDEVWFCKFSPDGLKLATGSKDSTVIIWDVDPYKLTLKHRRVLDGQAQLSVSFVSWSPDSKLILVGGTEDSHELYIWNVDDGKLVVKFSQSLEDSLACGAFSRDGARFVCGGQKGQLYLCDLNGTIVDSWEGVRVNSIAFRADNKTILAADNHYRIRGYNFDSPRSDFDILREPHPIMTFSINSADRLALLNVSNQGLHLWDIEDKCLVRRFQGIRQSNFAIHSCFGGVNESFVASGSEDKVVYIWHIKREEPLAKLAGHTKTVNCVSWNPVYPSLLASASDDATVRIWGPKPNGSSATTESDDCSSSSSSSSWNMT.

Low complexity predominate over residues 1–13 (MQSTSSTSSGSCS). Positions 1–90 (MQSTSSTSSG…NNRENTSCSG (90 aa)) are disordered. Phosphoserine is present on residues S36 and S40. 2 stretches are compositionally biased toward polar residues: residues 48–57 (PSGSSAATNG) and 66–75 (IVNNNGSSSR). The LisH domain maps to 96–128 (SNQEIIRLIGQYLHDVGLDKSVQTLMLESGCYL). The CTLH domain occupies 129 to 190 (EHPSATKFRE…EHLDDGNPLD (62 aa)). WD repeat units follow at residues 312-351 (DHCD…LTLK), 359-400 (QAQL…LVVK), 404-443 (SLED…VDSW), 445-482 (GVRV…SDFD), 485-524 (REPH…LVRR), 529-569 (RQSN…PLAK), and 572-612 (GHTK…SSAT). Positions 604–630 (PKPNGSSATTESDDCSSSSSSSSWNMT) are disordered. Low complexity predominate over residues 609-630 (SSATTESDDCSSSSSSSSWNMT).

Its subcellular location is the cytoplasm. It is found in the mitochondrion. In terms of biological role, G-beta-like protein involved in cell signal transduction. In Drosophila melanogaster (Fruit fly), this protein is WD repeat-containing protein 26 homolog.